Here is a 215-residue protein sequence, read N- to C-terminus: Glutaredoxin 2 (215 aa).

One can recognise a GST N-terminal domain in the interval 1–77 (MKLYIYDHCP…YVDKLDGKPL (77 aa)). A disulfide bridge connects residues Cys-9 and Cys-12.

It belongs to the glutaredoxin family.

Functionally, involved in reducing some disulfides in a coupled system with glutathione reductase. Does not act as hydrogen donor for ribonucleotide reductase. This chain is Glutaredoxin 2 (grxB), found in Escherichia coli O157:H7.